Consider the following 320-residue polypeptide: Transcription factor bHLH96 (320 aa).

Positions 30 to 121 (EEEDQDPQDT…RSSKNKEEIE (92 aa)) are disordered. A compositionally biased stretch (acidic residues) spans 65–76 (YSDDYNYNEEDL). The segment covering 104 to 114 (GRRKRRRTRSS) has biased composition (basic residues). The bHLH domain occupies 122–173 (NQRMTHIAVERNRRKQMNEYLAVLRSLMPPYYAQRGDQASIVGGAINYLKEL). The tract at residues 184–206 (VKTATEDTGAGHDQTKTTSASSS) is disordered. An ACT domain is found at 244–320 (SLKILAKKRP…RRIEEESSFS (77 aa)).

As to quaternary structure, homodimer. As to expression, expressed constitutively in roots, leaves, stems, and flowers.

It localises to the nucleus. This is Transcription factor bHLH96 (BHLH96) from Arabidopsis thaliana (Mouse-ear cress).